The following is a 262-amino-acid chain: Shikimate dehydrogenase (NADP(+)) (262 aa).

Shikimate contacts are provided by residues 15–17 (SRS) and T62. The Proton acceptor role is filled by K66. E78 contacts NADP(+). Residues N87 and D102 each coordinate shikimate. NADP(+) is bound by residues 126 to 130 (GAGGA), 150 to 155 (NRTLAR), and M214. Y216 provides a ligand contact to shikimate. G236 is a binding site for NADP(+).

Belongs to the shikimate dehydrogenase family. As to quaternary structure, homodimer.

The catalysed reaction is shikimate + NADP(+) = 3-dehydroshikimate + NADPH + H(+). The protein operates within metabolic intermediate biosynthesis; chorismate biosynthesis; chorismate from D-erythrose 4-phosphate and phosphoenolpyruvate: step 4/7. In terms of biological role, involved in the biosynthesis of the chorismate, which leads to the biosynthesis of aromatic amino acids. Catalyzes the reversible NADPH linked reduction of 3-dehydroshikimate (DHSA) to yield shikimate (SA). The sequence is that of Shikimate dehydrogenase (NADP(+)) from Acinetobacter baumannii (strain ATCC 17978 / DSM 105126 / CIP 53.77 / LMG 1025 / NCDC KC755 / 5377).